Here is a 160-residue protein sequence, read N- to C-terminus: Cytosolic iron-sulfur assembly component 2A (160 aa).

Zn(2+) contacts are provided by histidine 89, histidine 123, glutamate 150, and glutamate 153.

The protein belongs to the MIP18 family. As to quaternary structure, monomer and homodimer. Component of the CIA complex. Interacts with CIAO1. Interacts with IREB2. Interacts with APAF1.

It is found in the cytoplasm. In terms of biological role, component of the cytosolic iron-sulfur protein assembly (CIA) complex, a multiprotein complex that mediates the incorporation of iron-sulfur cluster into extramitochondrial Fe/S proteins. As a CIA complex component and in collaboration with CIAO1 specifically matures ACO1 and stabilizes IREB2, connecting cytosolic iron-sulfur protein maturation with cellular iron regulation. May play a role in chromosome segregation through establishment of sister chromatid cohesion. May induce apoptosis in collaboration with APAF1. This Bos taurus (Bovine) protein is Cytosolic iron-sulfur assembly component 2A.